The primary structure comprises 263 residues: Isoprenyl transferase (263 aa).

The active site involves aspartate 38. Residue aspartate 38 coordinates Mg(2+). Substrate is bound by residues glycine 39 to arginine 42, histidine 55, and serine 83 to aspartate 85. The active-site Proton acceptor is asparagine 86. Substrate contacts are provided by residues phenylalanine 87, arginine 89, arginine 212, and arginine 218 to serine 220. Glutamate 231 contacts Mg(2+).

It belongs to the UPP synthase family. In terms of assembly, homodimer. It depends on Mg(2+) as a cofactor.

Functionally, catalyzes the condensation of isopentenyl diphosphate (IPP) with allylic pyrophosphates generating different type of terpenoids. This chain is Isoprenyl transferase, found in Thermus thermophilus (strain ATCC BAA-163 / DSM 7039 / HB27).